We begin with the raw amino-acid sequence, 274 residues long: DNA repair protein Rad1 (274 aa).

The protein belongs to the rad1 family. In terms of assembly, component of the 9-1-1 checkpoint clamp complex consisting of Rad9 isoform A, Rad1 and Hus1-like; the interaction with Hus1-like is direct. Does not interact directly with Rad9; this interaction is probably mediated by Hus1-like. This complex probably also forms with Rad9 isoform B, however 9-1-1 complex containing Rad9 isoform A localizes to the nuclear periphery. As to expression, expressed in ovary.

It localises to the cytoplasm. The protein resides in the nucleus. It is found in the nucleus envelope. In Drosophila melanogaster (Fruit fly), this protein is DNA repair protein Rad1.